Reading from the N-terminus, the 197-residue chain is Dephospho-CoA kinase (197 aa).

Positions 2–197 (IIGLTGGIGS…HTKYMELLNE (196 aa)) constitute a DPCK domain. An ATP-binding site is contributed by 10–15 (GSGKSA).

Belongs to the CoaE family.

The protein resides in the cytoplasm. The catalysed reaction is 3'-dephospho-CoA + ATP = ADP + CoA + H(+). The protein operates within cofactor biosynthesis; coenzyme A biosynthesis; CoA from (R)-pantothenate: step 5/5. In terms of biological role, catalyzes the phosphorylation of the 3'-hydroxyl group of dephosphocoenzyme A to form coenzyme A. The polypeptide is Dephospho-CoA kinase (Gamma-proteobacterium EBAC31A08).